The sequence spans 353 residues: Putative glycosyltransferase TagX (353 aa).

Belongs to the glycosyltransferase 2 family.

The chain is Putative glycosyltransferase TagX (tagX) from Staphylococcus aureus (strain MRSA252).